A 177-amino-acid polypeptide reads, in one-letter code: ATP synthase subunit delta (177 aa).

Belongs to the ATPase delta chain family. In terms of assembly, F-type ATPases have 2 components, F(1) - the catalytic core - and F(0) - the membrane proton channel. F(1) has five subunits: alpha(3), beta(3), gamma(1), delta(1), epsilon(1). F(0) has three main subunits: a(1), b(2) and c(10-14). The alpha and beta chains form an alternating ring which encloses part of the gamma chain. F(1) is attached to F(0) by a central stalk formed by the gamma and epsilon chains, while a peripheral stalk is formed by the delta and b chains.

The protein localises to the cell inner membrane. Functionally, f(1)F(0) ATP synthase produces ATP from ADP in the presence of a proton or sodium gradient. F-type ATPases consist of two structural domains, F(1) containing the extramembraneous catalytic core and F(0) containing the membrane proton channel, linked together by a central stalk and a peripheral stalk. During catalysis, ATP synthesis in the catalytic domain of F(1) is coupled via a rotary mechanism of the central stalk subunits to proton translocation. Its function is as follows. This protein is part of the stalk that links CF(0) to CF(1). It either transmits conformational changes from CF(0) to CF(1) or is implicated in proton conduction. The protein is ATP synthase subunit delta of Haemophilus influenzae (strain PittGG).